The primary structure comprises 528 residues: Transcriptional activator protein UGA3 (528 aa).

The segment at residues cysteine 17 to cysteine 44 is a DNA-binding region (zn(2)-C6 fungal-type). The Nuclear localization signal signature appears at serine 55–aspartate 62.

As to quaternary structure, UGA3 proteins associate in oligomers, at least in the presence of inducer.

The protein localises to the nucleus. GABA-dependent positive regulation of genes required for catabolism of GABA (UGA4, UGA1, and UGA2). This is Transcriptional activator protein UGA3 (UGA3) from Saccharomyces cerevisiae (strain ATCC 204508 / S288c) (Baker's yeast).